We begin with the raw amino-acid sequence, 275 residues long: Myb/SANT-like DNA-binding domain-containing protein 3 (275 aa).

In terms of domain architecture, Myb-like spans 13 to 78; that stretch reads FSELEKSILL…QLKKCWENIK (66 aa). Residues Ser96 and Ser98 each carry the phosphoserine modification. A Glycyl lysine isopeptide (Lys-Gly) (interchain with G-Cter in SUMO2) cross-link involves residue Lys154. The stretch at 211-247 forms a coiled coil; sequence QLIQMNEVHVAKIQQIERECEMAEEEHRIKMEVLNKK. At Ser274 the chain carries Phosphoserine.

The protein belongs to the MSANTD3 family.

The protein is Myb/SANT-like DNA-binding domain-containing protein 3 (MSANTD3) of Bos taurus (Bovine).